Here is a 283-residue protein sequence, read N- to C-terminus: Pantothenate synthetase (283 aa).

30–37 (MGTLHDGH) serves as a coordination point for ATP. H37 serves as the catalytic Proton donor. Position 61 (Q61) interacts with (R)-pantoate. Residue Q61 coordinates beta-alanine. 148–151 (GLKD) contributes to the ATP binding site. Q154 contributes to the (R)-pantoate binding site. ATP is bound at residue 185-188 (MSSR).

It belongs to the pantothenate synthetase family. In terms of assembly, homodimer.

It is found in the cytoplasm. It catalyses the reaction (R)-pantoate + beta-alanine + ATP = (R)-pantothenate + AMP + diphosphate + H(+). Its pathway is cofactor biosynthesis; (R)-pantothenate biosynthesis; (R)-pantothenate from (R)-pantoate and beta-alanine: step 1/1. Its function is as follows. Catalyzes the condensation of pantoate with beta-alanine in an ATP-dependent reaction via a pantoyl-adenylate intermediate. The polypeptide is Pantothenate synthetase (Leptospira biflexa serovar Patoc (strain Patoc 1 / Ames)).